A 23-amino-acid chain; its full sequence is Potassium channel toxin kappa-KTx 1.2 (23 aa).

Disulfide bonds link Cys4/Cys22 and Cys8/Cys18. A Cysteine amide modification is found at Cys22.

Belongs to the short scorpion toxin superfamily. Potassium channel inhibitor kappa-KTx family. Kappa-KTx 1 subfamily. The two disulfide isomers globular (C1-C3, C2-C4) and beads (C1-C2, C3-C4) do not show activity on Kv10.1/KCNH1/EAG1. In terms of tissue distribution, expressed by the venom gland.

It is found in the secreted. Functionally, shows weak blocking activity on voltage-gated potassium channels Kv10.1/KCNH1/EAG1 (IC(50)=26 uM), Kv1.2/KCNA2 (Kd=150 uM), Kv1.3/KCNA3 (Kd=40 uM), Kv1.6/KCNA3 (16.6% inhibition at 40 uM toxin). The block is dose-dependent, voltage-independent, and reversible. Also shows a weak inhibitory activity on the plant pathogen F.culmorum growth (IC(50)=18.8-37.7 uM). The chain is Potassium channel toxin kappa-KTx 1.2 from Chersonesometrus fulvipes (Indian black scorpion).